We begin with the raw amino-acid sequence, 88 residues long: uncharacterized protein (88 aa).

This is an uncharacterized protein from Treponema pallidum (strain Nichols).